Consider the following 175-residue polypeptide: MAFMRKAAVYLGLVEDDEERYEDYDDYDDAEPHRREPREAVERDLGSRRTAVVRRMDARESSPADPAELRRVSEPAPTERPTPPLRVTTLHPRTYNEARAIGEHFREGIPVIMNLTEMDDADAKRLVDFAAGLTFGLRGSIERITSKVFLLSPRNVEVTAEDKRRMAEGGFFNQS.

Over residues 20–29 (RYEDYDDYDD) the composition is skewed to acidic residues. Residues 20–88 (RYEDYDDYDD…ERPTPPLRVT (69 aa)) form a disordered region. 2 stretches are compositionally biased toward basic and acidic residues: residues 30 to 47 (AEPH…DLGS) and 54 to 73 (RRMD…RRVS).

It belongs to the SepF family. Homodimer. Interacts with FtsZ.

The protein resides in the cytoplasm. Functionally, cell division protein that is part of the divisome complex and is recruited early to the Z-ring. Probably stimulates Z-ring formation, perhaps through the cross-linking of FtsZ protofilaments. Its function overlaps with FtsA. In Acidothermus cellulolyticus (strain ATCC 43068 / DSM 8971 / 11B), this protein is Cell division protein SepF.